Reading from the N-terminus, the 190-residue chain is Segregation and condensation protein B (190 aa).

Belongs to the ScpB family. In terms of assembly, homodimer. Homodimerization may be required to stabilize the binding of ScpA to the Smc head domains. Component of a cohesin-like complex composed of ScpA, ScpB and the Smc homodimer, in which ScpA and ScpB bind to the head domain of Smc. The presence of the three proteins is required for the association of the complex with DNA.

Its subcellular location is the cytoplasm. Its function is as follows. Participates in chromosomal partition during cell division. May act via the formation of a condensin-like complex containing Smc and ScpA that pull DNA away from mid-cell into both cell halves. This chain is Segregation and condensation protein B, found in Bacillus cereus (strain AH187).